The following is a 179-amino-acid chain: Transcription factor 21 (179 aa).

Residues 23–87 (IKLDPNKEFG…QVQRNAANAR (65 aa)) form a disordered region. The segment covering 34-46 (SNDSNEESSTCDN) has biased composition (polar residues). The span at 50 to 64 (KKGRGTSGKRRKAPS) shows a compositional bias: basic residues. Over residues 70–80 (GNINQEGKQVQ) the composition is skewed to polar residues. One can recognise a bHLH domain in the interval 79 to 131 (VQRNAANARERARMRVLSKAFSRLKTTLPWVPPDTKLSKLDTLRLASSYIAHL).

As to quaternary structure, efficient DNA binding requires dimerization with another bHLH protein.

The protein localises to the nucleus. Functionally, involved in epithelial-mesenchymal interactions in kidney and lung morphogenesis that include epithelial differentiation and branching morphogenesis. The chain is Transcription factor 21 (tcf21) from Xenopus tropicalis (Western clawed frog).